A 147-amino-acid chain; its full sequence is UPF0178 protein AFE_3267 (147 aa).

It belongs to the UPF0178 family.

This Acidithiobacillus ferrooxidans (strain ATCC 23270 / DSM 14882 / CIP 104768 / NCIMB 8455) (Ferrobacillus ferrooxidans (strain ATCC 23270)) protein is UPF0178 protein AFE_3267.